A 269-amino-acid polypeptide reads, in one-letter code: Cytolethal distending toxin subunit B (269 aa).

The signal sequence occupies residues 1–18 (MKKYIISLIVFLSFYAQA). Positions 195–210 (REPADLEMNLTVPVRR) match the Nuclear localization signal motif.

Heterotrimer of 3 subunits, CdtA, CdtB and CdtC.

The protein resides in the secreted. In terms of biological role, part of the tripartite complex that is required for the CDT activity. CdtB exhibits a DNA-nicking endonuclease activity, and very probably causes DNA damage in intoxicated cells. This damage induces G2/M cell cycle arrest, chromatin fragmentation, cell distention and nucleus enlargement. The sequence is that of Cytolethal distending toxin subunit B (cdtB) from Escherichia coli.